A 538-amino-acid polypeptide reads, in one-letter code: Syncytin-2 (538 aa).

The signal sequence occupies residues 1-15 (MGLLLLVLILTPLLA). At 16-478 (AHRHPDFPLL…GWLNWEGTWK (463 aa)) the chain is on the extracellular side. Residues 43-46 (CWLC) carry the CXXC motif. Disulfide bonds link cysteine 43–cysteine 46, cysteine 43–cysteine 439, and cysteine 431–cysteine 438. Asparagine 133, asparagine 146, asparagine 177, asparagine 220, asparagine 241, asparagine 247, asparagine 312, and asparagine 332 each carry an N-linked (GlcNAc...) asparagine glycan. The fusion peptide stretch occupies residues 354 to 374 (FIPLLAGLGIIAGTGTGIAGI). The CKS-17 signature appears at 414–430 (LQNRRGLDMLTAAQGGI). The CX6CC signature appears at 431-439 (CLALDEKCC). A glycan (N-linked (GlcNAc...) asparagine) is linked at asparagine 443. Residues 479 to 499 (WFSWVLPFTGPLVSLLLLLLF) traverse the membrane as a helical segment. Residues 500–538 (GPCLLNLITQFVLSRLQAIKLQTNLSAGCRPHNIQESPF) lie on the Cytoplasmic side of the membrane.

It belongs to the gamma type-C retroviral envelope protein family. HERV class-I FRD env subfamily. As to quaternary structure, the surface and transmembrane proteins form a heterodimer. They are attached by non-covalent interactions or by a labile interchain disulfide bond. Post-translationally, specific enzymatic cleavages in vivo yield the mature SU and TM proteins. In terms of processing, the CXXC motif is highly conserved across a broad range of retroviral envelope proteins. It is thought to participate in the formation of a labile disulfide bond possibly with the CX6CC motif present in the transmembrane protein.

Its subcellular location is the virion. The protein localises to the cell membrane. Functionally, this endogenous retroviral envelope protein has retained its original fusogenic properties and participates in trophoblast fusion and the formation of a syncytium during placenta morphogenesis. The interaction with MFSD2A is apparently important for this process. Its function is as follows. Endogenous envelope proteins may have kept, lost or modified their original function during evolution but this one can still make pseudotypes with MLV, HIV-1 or SIV-1 virions and confer infectivity. Retroviral envelope proteins mediate receptor recognition and membrane fusion during early infection. The surface protein mediates receptor recognition, while the transmembrane protein anchors the envelope heterodimer to the viral membrane through one transmembrane domain. The other hydrophobic domain, called fusion peptide, mediates fusion of the viral membrane with the target cell membrane. The sequence is that of Syncytin-2 (ERVFRD-1) from Pongo pygmaeus (Bornean orangutan).